Reading from the N-terminus, the 221-residue chain is MGWEKGLAPREKLVRLGAESLTDVELLAIFLRTGLPGVHVMQLAEDLLVQFGSLYQLMTADQSAFRTAKGVGISKYTQIKAIAELSRRLFFSRLAKEDAMLNPQATGQYLQLLLSRREREVFLVLFLDNQHHVIRHQEMFVGTINSVEVHPREIVREALKANAAALILAHNHPSGKAEPSQADRAITEQIVKACLLMEIRVLDHLVIGHGEYVSFAERGWI.

An MPN domain is found at 99–221; sequence AMLNPQATGQ…YVSFAERGWI (123 aa). Positions 170, 172, and 183 each coordinate Zn(2+). Residues 170-183 carry the JAMM motif motif; it reads HNHPSGKAEPSQAD.

This sequence belongs to the UPF0758 family. YicR subfamily.

The polypeptide is UPF0758 protein PC1_4100 (Pectobacterium carotovorum subsp. carotovorum (strain PC1)).